A 551-amino-acid chain; its full sequence is Meiotically up-regulated gene 184 protein (551 aa).

Residues 12–78 form the J domain; it reads DYYAILKLQK…TKRLIYDQLF (67 aa). The segment covering 85–122 has biased composition (polar residues); it reads RSQYKPNSTSNPSKHTSAYASYNKGKNSKWSSPFASTT. Disordered stretches follow at residues 85-153, 176-226, and 334-359; these read RSQY…FPRD, RQEP…SVYK, and EAES…TRNN. Residues 124–133 show a composition bias toward basic and acidic residues; the sequence is KPQESSEKYS. Basic residues predominate over residues 134 to 146; sequence KKSSTRKKEHFNK. Basic and acidic residues-rich tracts occupy residues 176-187 and 203-219; these read RQEPESLKKENN and GPKD…KIPE.

It is found in the cytoplasm. The protein localises to the cytoskeleton. In terms of biological role, has a role in sporulation. The polypeptide is Meiotically up-regulated gene 184 protein (mug184) (Schizosaccharomyces pombe (strain 972 / ATCC 24843) (Fission yeast)).